Consider the following 283-residue polypeptide: Acetyl-coenzyme A carboxylase carboxyl transferase subunit beta (283 aa).

The 257-residue stretch at 27 to 283 (VWVKCERCGE…LLDLHLRGEK (257 aa)) folds into the CoA carboxyltransferase N-terminal domain. Positions 31, 34, 50, and 53 each coordinate Zn(2+). A C4-type zinc finger spans residues 31–53 (CERCGEILFKKELDKNYKVCLKC).

This sequence belongs to the AccD/PCCB family. In terms of assembly, acetyl-CoA carboxylase is a heterohexamer composed of biotin carboxyl carrier protein (AccB), biotin carboxylase (AccC) and two subunits each of ACCase subunit alpha (AccA) and ACCase subunit beta (AccD). Zn(2+) serves as cofactor.

Its subcellular location is the cytoplasm. The catalysed reaction is N(6)-carboxybiotinyl-L-lysyl-[protein] + acetyl-CoA = N(6)-biotinyl-L-lysyl-[protein] + malonyl-CoA. It functions in the pathway lipid metabolism; malonyl-CoA biosynthesis; malonyl-CoA from acetyl-CoA: step 1/1. Component of the acetyl coenzyme A carboxylase (ACC) complex. Biotin carboxylase (BC) catalyzes the carboxylation of biotin on its carrier protein (BCCP) and then the CO(2) group is transferred by the transcarboxylase to acetyl-CoA to form malonyl-CoA. This Pelotomaculum thermopropionicum (strain DSM 13744 / JCM 10971 / SI) protein is Acetyl-coenzyme A carboxylase carboxyl transferase subunit beta.